The chain runs to 732 residues: Polyribonucleotide nucleotidyltransferase (732 aa).

Positions 502 and 508 each coordinate Mg(2+). The 60-residue stretch at Pro569–Ile628 folds into the KH domain. Residues Gly638 to Lys712 form the S1 motif domain.

It belongs to the polyribonucleotide nucleotidyltransferase family. The cofactor is Mg(2+).

It is found in the cytoplasm. It carries out the reaction RNA(n+1) + phosphate = RNA(n) + a ribonucleoside 5'-diphosphate. In terms of biological role, involved in mRNA degradation. Catalyzes the phosphorolysis of single-stranded polyribonucleotides processively in the 3'- to 5'-direction. The polypeptide is Polyribonucleotide nucleotidyltransferase (Chlorobaculum parvum (strain DSM 263 / NCIMB 8327) (Chlorobium vibrioforme subsp. thiosulfatophilum)).